The chain runs to 403 residues: D-galactonate dehydratase family member Mmwyl1_0037 (403 aa).

Residues N37 and H122 each coordinate substrate. The active-site Proton donor/acceptor is Y159. D211 provides a ligand contact to Mg(2+). The Proton donor/acceptor role is filled by H213. The Mg(2+) site is built by E237 and E263. Substrate-binding residues include E263, R284, H313, D317, and E340.

Belongs to the mandelate racemase/muconate lactonizing enzyme family. GalD subfamily. Mg(2+) serves as cofactor.

It catalyses the reaction D-mannonate = 2-dehydro-3-deoxy-D-gluconate + H2O. Has low D-mannonate dehydratase activity (in vitro), suggesting that this is not a physiological substrate and that it has no significant role in D-mannonate degradation in vivo. Has no detectable activity with a panel of 70 other acid sugars (in vitro). The chain is D-galactonate dehydratase family member Mmwyl1_0037 from Marinomonas sp. (strain MWYL1).